Here is a 575-residue protein sequence, read N- to C-terminus: Probable lysosomal cobalamin transporter (575 aa).

Helical transmembrane passes span 8-28 (LIWV…SVFI), 46-66 (IVAI…VALV), 95-115 (LVYY…VPFV), 144-164 (YTLS…FVPI), and 188-208 (ALTF…ALHT). N-linked (GlcNAc...) asparagine glycosylation is present at N233. Helical transmembrane passes span 314-334 (LVGL…ILTA), 376-396 (AIFT…IATV), 420-440 (VMTA…SMIV), and 504-524 (FGAI…LALI). Positions 537–549 (QLDEDAEEAEEEA) are enriched in acidic residues. Residues 537-556 (QLDEDAEEAEEEALLSGSRR) are disordered.

It belongs to the LIMR family. LMBRD1 subfamily.

The protein resides in the lysosome membrane. Functionally, probable lysosomal cobalamin transporter. Required to export cobalamin from lysosomes allowing its conversion to cofactors. This is Probable lysosomal cobalamin transporter from Emericella nidulans (strain FGSC A4 / ATCC 38163 / CBS 112.46 / NRRL 194 / M139) (Aspergillus nidulans).